A 224-amino-acid chain; its full sequence is MVSAIVVAGGKGKRMGTVQSKQYLSLNGKPILYYTIKSFLDCKLVDNIILVVPSHEIDYCEKEILEKNSLKVNKIVAGGDERYDSVYNGLIEAKGSDIVLIHDGVRPFVSKETIENAIKYSEEYGAAAPGVMPKDTIKIIDDNRFSIDTPNRSHLISVQTPQAFKFDLIYDCHKKIKNENVNITDDTMVAEYFGNKVYIYPGEYTNIKITTPEDLIIGEYLVNR.

The protein belongs to the IspD/TarI cytidylyltransferase family. IspD subfamily.

The enzyme catalyses 2-C-methyl-D-erythritol 4-phosphate + CTP + H(+) = 4-CDP-2-C-methyl-D-erythritol + diphosphate. It participates in isoprenoid biosynthesis; isopentenyl diphosphate biosynthesis via DXP pathway; isopentenyl diphosphate from 1-deoxy-D-xylulose 5-phosphate: step 2/6. Functionally, catalyzes the formation of 4-diphosphocytidyl-2-C-methyl-D-erythritol from CTP and 2-C-methyl-D-erythritol 4-phosphate (MEP). This is 2-C-methyl-D-erythritol 4-phosphate cytidylyltransferase from Clostridium botulinum (strain Eklund 17B / Type B).